A 101-amino-acid polypeptide reads, in one-letter code: Small ribosomal subunit protein bS18c (101 aa).

This sequence belongs to the bacterial ribosomal protein bS18 family. As to quaternary structure, part of the 30S ribosomal subunit.

It localises to the plastid. The protein localises to the chloroplast. This chain is Small ribosomal subunit protein bS18c, found in Aethionema grandiflorum (Persian stone-cress).